The sequence spans 505 residues: Glycerol kinase (505 aa).

Thr12 provides a ligand contact to ADP. ATP contacts are provided by Thr12, Thr13, and Ser14. Thr12 is a sn-glycerol 3-phosphate binding site. Residue Arg16 coordinates ADP. Residues Arg82, Glu83, Tyr134, and Asp249 each coordinate sn-glycerol 3-phosphate. Residues Arg82, Glu83, Tyr134, Asp249, and Gln250 each coordinate glycerol. 2 residues coordinate ADP: Thr271 and Gly315. The ATP site is built by Thr271, Gly315, Gln319, and Gly416. ADP contacts are provided by Gly416 and Asn420.

The protein belongs to the FGGY kinase family.

The catalysed reaction is glycerol + ATP = sn-glycerol 3-phosphate + ADP + H(+). Its pathway is polyol metabolism; glycerol degradation via glycerol kinase pathway; sn-glycerol 3-phosphate from glycerol: step 1/1. Its activity is regulated as follows. Inhibited by fructose 1,6-bisphosphate (FBP). Key enzyme in the regulation of glycerol uptake and metabolism. Catalyzes the phosphorylation of glycerol to yield sn-glycerol 3-phosphate. In Mycolicibacterium gilvum (strain PYR-GCK) (Mycobacterium gilvum (strain PYR-GCK)), this protein is Glycerol kinase.